Consider the following 555-residue polypeptide: Sesquiterpene synthase 31 (555 aa).

The Mg(2+) site is built by aspartate 308, aspartate 312, aspartate 451, threonine 455, and glutamate 459. A DDXXD motif motif is present at residues 308-312; that stretch reads DDTFD.

Belongs to the terpene synthase family. Tpsa subfamily. The cofactor is Mg(2+). It depends on Mn(2+) as a cofactor. In terms of tissue distribution, expressed in stem and leaf trichomes. Detected in roots, fruits and flowers.

It localises to the cytoplasm. The catalysed reaction is (2E,6E)-farnesyl diphosphate = viridiflorene + diphosphate. The protein operates within secondary metabolite biosynthesis; terpenoid biosynthesis. Functionally, sesquiterpene synthase involved in the production of viridiflorene from (E,E)-farnesyl diphosphate (FPP). Has no activity with (Z,Z)-FPP. Can act with a low efficiency as a monoterpene synthase with geranyl diphosphate as substrate. The chain is Sesquiterpene synthase 31 from Solanum lycopersicum (Tomato).